Consider the following 465-residue polypeptide: UDP-N-acetylmuramate--L-alanine ligase (465 aa).

Position 112–118 (112–118) interacts with ATP; the sequence is GTHGKTT.

It belongs to the MurCDEF family.

The protein localises to the cytoplasm. The enzyme catalyses UDP-N-acetyl-alpha-D-muramate + L-alanine + ATP = UDP-N-acetyl-alpha-D-muramoyl-L-alanine + ADP + phosphate + H(+). It participates in cell wall biogenesis; peptidoglycan biosynthesis. In terms of biological role, cell wall formation. This chain is UDP-N-acetylmuramate--L-alanine ligase, found in Burkholderia cenocepacia (strain ATCC BAA-245 / DSM 16553 / LMG 16656 / NCTC 13227 / J2315 / CF5610) (Burkholderia cepacia (strain J2315)).